The primary structure comprises 118 residues: V-type proton ATPase subunit G 2 (118 aa).

Residues 25-90 (ARKRKARRLK…VQGMQSSQQR (66 aa)) are disordered. The segment covering 35-56 (QAKEEAQMEVEQYRREREHEFQ) has biased composition (basic and acidic residues). Polar residues-rich tracts occupy residues 57–69 (SKQQ…QGNL) and 78–89 (RRQVQGMQSSQQ).

Belongs to the V-ATPase G subunit family. As to quaternary structure, V-ATPase is a heteromultimeric enzyme made up of two complexes: the ATP-hydrolytic V1 complex and the proton translocation V0 complex. The V1 complex consists of three catalytic AB heterodimers that form a heterohexamer, three peripheral stalks each consisting of EG heterodimers, one central rotor including subunits D and F, and the regulatory subunits C and H. The proton translocation complex V0 consists of the proton transport subunit a, a ring of proteolipid subunits c9c'', rotary subunit d, subunits e and f, and the accessory subunits ATP6AP1/Ac45 and ATP6AP2/PRR. Brain.

It is found in the melanosome. The protein resides in the cytoplasmic vesicle. It localises to the clathrin-coated vesicle membrane. In terms of biological role, subunit of the V1 complex of vacuolar(H+)-ATPase (V-ATPase), a multisubunit enzyme composed of a peripheral complex (V1) that hydrolyzes ATP and a membrane integral complex (V0) that translocates protons. V-ATPase is responsible for acidifying and maintaining the pH of intracellular compartments and in some cell types, is targeted to the plasma membrane, where it is responsible for acidifying the extracellular environment. The chain is V-type proton ATPase subunit G 2 (ATP6V1G2) from Homo sapiens (Human).